We begin with the raw amino-acid sequence, 149 residues long: uncharacterized protein (149 aa).

Residues 124 to 144 (IIIIALIIILANYAPSIIGKI) form a helical membrane-spanning segment.

This sequence belongs to the M.jannaschii MJ0023/MJ0349/MJ1072/MJ1074/MJ1107/MJECL16 family.

It localises to the membrane. This is an uncharacterized protein from Methanocaldococcus jannaschii (strain ATCC 43067 / DSM 2661 / JAL-1 / JCM 10045 / NBRC 100440) (Methanococcus jannaschii).